Consider the following 635-residue polypeptide: Very-long-chain aldehyde decarbonylase GL1-6 (635 aa).

4 consecutive transmembrane segments (helical) span residues 46-66 (LLNF…QLWI), 100-120 (IILT…AQVA), 127-147 (GMVV…YWLH), and 183-203 (VVYF…GTVS). The region spanning 139–273 (VEFLYYWLHR…MPVYDYIYGT (135 aa)) is the Fatty acid hydroxylase domain.

This sequence belongs to the sterol desaturase family. Homodimer.

It is found in the endoplasmic reticulum membrane. The catalysed reaction is a long-chain fatty aldehyde + 2 NADPH + O2 + H(+) = a long-chain alkane + formate + 2 NADP(+) + H2O. Aldehyde decarbonylase involved in the conversion of aldehydes to alkanes. Core component of a very-long-chain alkane synthesis complex. In Oryza sativa subsp. indica (Rice), this protein is Very-long-chain aldehyde decarbonylase GL1-6.